The primary structure comprises 158 residues: Endoribonuclease YbeY (158 aa).

Zn(2+) contacts are provided by H120, H124, and H130.

This sequence belongs to the endoribonuclease YbeY family. The cofactor is Zn(2+).

The protein localises to the cytoplasm. Single strand-specific metallo-endoribonuclease involved in late-stage 70S ribosome quality control and in maturation of the 3' terminus of the 16S rRNA. This Spiroplasma citri protein is Endoribonuclease YbeY.